A 506-amino-acid polypeptide reads, in one-letter code: MDLRPEEVSAIIKQQIDKYGNKSHVDDVGYVLQAGDGIARVYGLNNCMSGELLEFENGVFGMAMNLEEDNIGCVLFRGERDVKEGTLVKRTGKTVEVPVGKALIGRVIDPLGNPLDGKGEIETEKFRPIEYPAPSVMDRKPVNRPLQTGIMAIDAMVPIGRGQRELIIGDRQTGKTAIAVDTILNQKGKDVICIYVAIGQKASSVAEVINTLEEGGAMEYTVVVSSTASEMPTLQYIAPYAGCSIAEEFMYNDHKDVLIVYDDLSKHAVAYRAMSLLLRRPPGREAYPGDVFYLHSRLLERAAQLSDELGGGSITALPIIETQVGDVSAYIPTNVISITDGQIYLETELFYSGQRPAVNVGLSVSRVGGAAQIKAMKKVAGALRINLAQYRELAVFAQFGSDLDKVTKDKLIQGERLVESLKQSRRATMPVEDQVIVLYMATNKYLMDLPVKEVRSFNKEFVKFVNSNYPEIPNEIRATGDLSSETENMLKKAAEEFKDQYLRTKR.

Position 169 to 176 (G169 to T176) interacts with ATP.

It belongs to the ATPase alpha/beta chains family. As to quaternary structure, F-type ATPases have 2 components, CF(1) - the catalytic core - and CF(0) - the membrane proton channel. CF(1) has five subunits: alpha(3), beta(3), gamma(1), delta(1), epsilon(1). CF(0) has three main subunits: a(1), b(2) and c(9-12). The alpha and beta chains form an alternating ring which encloses part of the gamma chain. CF(1) is attached to CF(0) by a central stalk formed by the gamma and epsilon chains, while a peripheral stalk is formed by the delta and b chains.

It is found in the cell membrane. It carries out the reaction ATP + H2O + 4 H(+)(in) = ADP + phosphate + 5 H(+)(out). Functionally, produces ATP from ADP in the presence of a proton gradient across the membrane. The alpha chain is a regulatory subunit. This is ATP synthase subunit alpha from Acetivibrio thermocellus (strain ATCC 27405 / DSM 1237 / JCM 9322 / NBRC 103400 / NCIMB 10682 / NRRL B-4536 / VPI 7372) (Clostridium thermocellum).